The primary structure comprises 2531 residues: Serine/threonine-protein kinase ATR (2531 aa).

Residues Leu1490–Gln2067 enclose the FAT domain. Residues Phe2192 to Glu2512 form the PI3K/PI4K catalytic domain. Positions Val2198–Lys2204 are G-loop. The interval Gly2368 to Asn2376 is catalytic loop. An activation loop region spans residues His2387 to Thr2411. Positions His2499–Leu2531 constitute an FATC domain.

The protein belongs to the PI3/PI4-kinase family. ATM subfamily. Mn(2+) serves as cofactor.

It localises to the nucleus. The catalysed reaction is L-seryl-[protein] + ATP = O-phospho-L-seryl-[protein] + ADP + H(+). It catalyses the reaction L-threonyl-[protein] + ATP = O-phospho-L-threonyl-[protein] + ADP + H(+). Functionally, serine/threonine protein kinase which activates checkpoint signaling upon genotoxic stresses such as ionizing radiation (IR), ultraviolet light (UV), or DNA replication stalling, thereby acting as a DNA damage sensor. Recognizes the substrate consensus sequence [ST]-Q. Phosphorylates various proteins, which collectively inhibits DNA replication and mitosis and promotes DNA repair and recombination. Prevents mitotic catastrophe by functioning in the S-phase checkpoint and cooperating with atm-1 in the checkpoint response to double-strand breaks (DSBs) after ionizing radiation (IR) to induce cell cycle arrest or apoptosis via the cep-1/p53 pathway. In response to ionizing radiation, probably required for the association between the brc-1-brd-1 heterodimer and rad-51 and let-70 in order to activate E3-ubiquitin ligase activity of the heterodimer and induce ubiquitination at DNA damage sites. The protein is Serine/threonine-protein kinase ATR of Caenorhabditis elegans.